We begin with the raw amino-acid sequence, 404 residues long: NADH-quinone oxidoreductase subunit D 2 (404 aa).

It belongs to the complex I 49 kDa subunit family. NDH-1 is composed of 14 different subunits. Subunits NuoB, C, D, E, F, and G constitute the peripheral sector of the complex.

Its subcellular location is the cell inner membrane. The catalysed reaction is a quinone + NADH + 5 H(+)(in) = a quinol + NAD(+) + 4 H(+)(out). Its function is as follows. NDH-1 shuttles electrons from NADH, via FMN and iron-sulfur (Fe-S) centers, to quinones in the respiratory chain. The immediate electron acceptor for the enzyme in this species is believed to be ubiquinone. Couples the redox reaction to proton translocation (for every two electrons transferred, four hydrogen ions are translocated across the cytoplasmic membrane), and thus conserves the redox energy in a proton gradient. The sequence is that of NADH-quinone oxidoreductase subunit D 2 from Rhizobium meliloti (strain 1021) (Ensifer meliloti).